We begin with the raw amino-acid sequence, 1875 residues long: Protein MLP1 (1875 aa).

An N-acetylserine modification is found at Ser2. 2 coiled-coil regions span residues 69 to 487 (ELKA…IQYL) and 531 to 1678 (ERLV…SAES). Thr337 carries the post-translational modification Phosphothreonine. Ser379 carries the post-translational modification Phosphoserine. A Required for nuclear localization motif is present at residues 1496 to 1565 (QPSNINMEEI…EEKVEERIKS (70 aa)). A disordered region spans residues 1641–1689 (KKSFDEGKQQAMMKTTLLERKLAKMESQLSETKQSAESPPKSVNNVQNP). Polar residues predominate over residues 1667–1688 (SQLSETKQSAESPPKSVNNVQN). A phosphoserine mark is found at Ser1670 and Ser1710. Residues 1716–1725 (KLNSKSSSGG) show a composition bias toward low complexity. The segment at 1716–1875 (KLNSKSSSGG…TDKVNDENSI (160 aa)) is disordered. Positions 1728–1737 (PFTSPSPNKH) are enriched in polar residues. At Ser1733 the chain carries Phosphoserine. A compositionally biased stretch (basic and acidic residues) spans 1738–1748 (LQNDNDKRESL). A compositionally biased stretch (polar residues) spans 1787–1801 (TSNNPAQKDSSNRNV). At Ser1803 the chain carries Phosphoserine. Composition is skewed to basic and acidic residues over residues 1807–1840 (TEKKKEGEPVKRGEAIEEQTKSNKRPIDEVGELK) and 1865–1875 (ETDKVNDENSI). Positions 1834–1866 (DEVGELKNDEDDTTENINESKKIKTEDEEEKET) form a coiled coil.

In terms of assembly, component of the nuclear pore complex (NPC). NPC constitutes the exclusive means of nucleocytoplasmic transport. NPCs allow the passive diffusion of ions and small molecules and the active, nuclear transport receptor-mediated bidirectional transport of macromolecules such as proteins, RNAs, ribonucleoparticles (RNPs), and ribosomal subunits across the nuclear envelope. Due to its 8-fold rotational symmetry, all subunits are present with 8 copies or multiples thereof. Interacts with NAB2, a hnRNP required for mRNA export. Interacts with MLP2. Post-translationally, may be phosphorylated by CDC28.

The protein localises to the nucleus. The protein resides in the nuclear pore complex. Together with the closely related MLP2, involved in the structural and functional organization of perinuclear chromatin. Together with MLP2, associates with the nuclear pore complex and form filamentous structures along the nuclear periphery. Has a role in the localization of Esc1 to nucleolar regions. Together with MLP2, mediates tethering of the some telomeres to the nuclear periphery, probably mediated by YKU70/YKU80 (HDF1/HDF2) heterodimer and show perinuclear location dependent silencing. MLP1 and MLP2 are involved in telomere length regulation but not silencing or telomere anchoring. Recognizes the 5'-splice site of pre-mRNAs and retains unspliced pre-mRNA in the nucleus without affecting splicing itself. This Saccharomyces cerevisiae (strain ATCC 204508 / S288c) (Baker's yeast) protein is Protein MLP1 (MLP1).